We begin with the raw amino-acid sequence, 171 residues long: Ribosome maturation factor RimM (171 aa).

In terms of domain architecture, PRC barrel spans 97–169 (DGEFYYHEII…RVDVDIMEGL (73 aa)).

It belongs to the RimM family. In terms of assembly, binds ribosomal protein uS19.

The protein resides in the cytoplasm. An accessory protein needed during the final step in the assembly of 30S ribosomal subunit, possibly for assembly of the head region. Essential for efficient processing of 16S rRNA. May be needed both before and after RbfA during the maturation of 16S rRNA. It has affinity for free ribosomal 30S subunits but not for 70S ribosomes. The protein is Ribosome maturation factor RimM of Lactococcus lactis subsp. cremoris (strain MG1363).